Consider the following 700-residue polypeptide: Protein UL29/28 (700 aa).

The disordered stretch occupies residues 1–30 (MSGRRKGCSAATASSSSSSPPSRLPLPGHA). Residues 9 to 21 (SAATASSSSSSPP) are compositionally biased toward low complexity.

Belongs to the herpesviridae US22 family. As to quaternary structure, interacts with UL38 and host HDAC1; these interactions are necessary for the HDAC1 interaction with UL38. Interacts with host MTA2.

The protein localises to the virion. The protein resides in the host nucleus. Its subcellular location is the host cytoplasm. In terms of biological role, contributes to activation of immediate-early gene expression. In Human cytomegalovirus (strain Merlin) (HHV-5), this protein is Protein UL29/28 (UL29).